We begin with the raw amino-acid sequence, 201 residues long: MKTTEQNYSIKEAMLFSQRIAQLSKALWKSIEKDWQQWIKPFDLNINEHHILWIAYHFKGASISEIAKFGVMHVSTAFNFSKKLEERGLLSFSKKQDDKRNTYIELTEKGEEVLLKLMESYDPTQNAVFNGALPLRELYGKFPEILEMMCIIRNIYGDDFMEIFERAFENIKNDFVEQDGKLVKRNAKSQEKEKELTSQSS.

In terms of domain architecture, HTH marR-type spans 13–157; sequence AMLFSQRIAQ…MMCIIRNIYG (145 aa). The segment at residues 63-86 is a DNA-binding region (H-T-H motif); sequence ISEIAKFGVMHVSTAFNFSKKLEE.

Homodimer.

Functionally, negative regulator of protease production and sporulation. The sequence is that of HTH-type transcriptional regulator Hpr from Geobacillus sp. (strain WCH70).